The following is an 87-amino-acid chain: Small ribosomal subunit protein bS20 (87 aa).

Positions 1-22 (MANSAQARKRARQSVKQRAHNA) are disordered. A compositionally biased stretch (basic residues) spans 7–19 (ARKRARQSVKQRA).

The protein belongs to the bacterial ribosomal protein bS20 family.

In terms of biological role, binds directly to 16S ribosomal RNA. In Neisseria gonorrhoeae (strain ATCC 700825 / FA 1090), this protein is Small ribosomal subunit protein bS20.